The sequence spans 88 residues: Small ribosomal subunit protein bS20 (88 aa).

The disordered stretch occupies residues 1 to 25 (MANSAQARKRVRQNNTRRQHAASQR). Positions 7–20 (ARKRVRQNNTRRQH) are enriched in basic residues.

This sequence belongs to the bacterial ribosomal protein bS20 family.

Its function is as follows. Binds directly to 16S ribosomal RNA. The protein is Small ribosomal subunit protein bS20 of Psychrobacter sp. (strain PRwf-1).